The sequence spans 165 residues: Pro-MCH (165 aa).

An N-terminal signal peptide occupies residues 1-21 (MAKMNLSSYILILTFSLFSQG). The residue at position 143 (Ile143) is an Isoleucine amide. A disulfide bridge links Cys153 with Cys162.

It belongs to the melanin-concentrating hormone family. Post-translationally, differentially processed in the brain and in peripheral organs producing two neuropeptides; NEI and MCH. A third peptide, NGE, may also be produced. Preferential processing in neurons by prohormone convertase 2 (PC2) generates NEI. MCH is generated in neurons of the lateral hypothalmic area by several prohormone convertases including PC1/3, PC2 and PC5/6. In terms of tissue distribution, predominantly expressed in lateral hypothalamus, also detected in pallidum, neocortex and cerebellum. Also found in thymus, brown adipose tissue, duodenum and testis (spermatogonia, early spermatocytes and Sertoli cells). No expression in peripheral blood. In brain exclusively mature MCH and NEI peptides are present. In peripheral tissues a large product, encompassing the NEI and MCH domains of the precursor, is found predominantly.

It localises to the secreted. Functionally, MCH may act as a neurotransmitter or neuromodulator in a broad array of neuronal functions directed toward the regulation of goal-directed behavior, such as food intake, and general arousal. May also have a role in spermatocyte differentiation. The protein is Pro-MCH (PMCH) of Homo sapiens (Human).